The sequence spans 435 residues: MKLLLLALFLSISASCLAEDITKISESRIPNEDAVPDYEAKWRLGAIQKLWNERRKMGHTPMTKFSPPGFPNADIFFKNETATATRTLKHRFAWALLLWAITEGKVTSKTSAVYDSTSGNTGSAEAYMCTLVNVPYYAVVADNLEKEKVKQIESFGGKIIKVPVALRNAKAKEFADKNHGFYMNQFGNAEKAEEFHESGDFYFESTNVYHEIIVQLKKDKEQIVKIPDYFVHSAGTGGTISSVGRYVARYGAPTKVVLSDSQYSLFYDYVIGHKFTNQSGAGIWTPPGIAGIGYGYDIEPVWYGETTSLTRNVIHEAMKMPDIASVATMRILDEKGYNVGPSTSLNFLVSLYKAYQNKARKSAIKHRLTIVTLACDPGDFYRSTYLNNEWVEKSFKKFGGVMGMECWKKLIQESIDTGSDFYSKGLTMCPGAFKV.

Residues Met-1 to Ala-18 form the signal peptide. Asn-79 carries N-linked (GlcNAc...) asparagine glycosylation. Lys-89 is modified (N6-(pyridoxal phosphate)lysine). Gly-235–Thr-239 provides a ligand contact to pyridoxal 5'-phosphate. Residue Asn-277 is glycosylated (N-linked (GlcNAc...) asparagine). Ser-342 contributes to the pyridoxal 5'-phosphate binding site.

It belongs to the cysteine synthase/cystathionine beta-synthase family. Highly divergent.

The protein is Putative pyridoxal-phosphate dependent protein F13B12.4 of Caenorhabditis elegans.